We begin with the raw amino-acid sequence, 385 residues long: Protein hunchback (385 aa).

2 disordered regions span residues 1–94 (IGGI…YDAM) and 124–216 (ESRA…PGLR). A compositionally biased stretch (low complexity) spans 63–77 (SASPSSSSKDSNGHS). Basic and acidic residues-rich tracts occupy residues 126 to 135 (RASDARDHSP) and 173 to 203 (PERR…REGS). 4 consecutive C2H2-type zinc fingers follow at residues 229 to 251 (FKCK…SKEH), 258 to 280 (LCCR…MRNH), 286 to 308 (FQCS…LKSH), and 314 to 338 (YRCA…KYQH). Positions 361–385 (TRRGPKQKPLSKIFEQQTGTNNHSP) are disordered. Over residues 374–385 (FEQQTGTNNHSP) the composition is skewed to polar residues.

This sequence belongs to the hunchback C2H2-type zinc-finger protein family.

The protein resides in the nucleus. Its function is as follows. Gap class segmentation protein that controls development of head structures. The protein is Protein hunchback (hb) of Bombyx mori (Silk moth).